The following is a 102-amino-acid chain: NADH-quinone oxidoreductase subunit K (102 aa).

3 helical membrane-spanning segments follow: residues 5-25 (LEHY…GIFV), 31-51 (IVIL…MVAF), and 66-86 (FVLT…VVFF).

It belongs to the complex I subunit 4L family. NDH-1 is composed of 14 different subunits. Subunits NuoA, H, J, K, L, M, N constitute the membrane sector of the complex.

Its subcellular location is the cellular chromatophore membrane. It carries out the reaction a quinone + NADH + 5 H(+)(in) = a quinol + NAD(+) + 4 H(+)(out). Functionally, NDH-1 shuttles electrons from NADH, via FMN and iron-sulfur (Fe-S) centers, to quinones in the respiratory chain. The immediate electron acceptor for the enzyme in this species is believed to be ubiquinone. Couples the redox reaction to proton translocation (for every two electrons transferred, four hydrogen ions are translocated across the cytoplasmic membrane), and thus conserves the redox energy in a proton gradient. The sequence is that of NADH-quinone oxidoreductase subunit K from Rhodobacter capsulatus (Rhodopseudomonas capsulata).